A 1231-amino-acid chain; its full sequence is Complement factor H (1231 aa).

A signal peptide spans 1 to 18 (MRLLAKIICLMLWAICVA). Sushi domains lie at 19-82 (EDCN…KCQK), 83-143 (RPCG…ICEV), 144-207 (VKCL…KCVE), 208-264 (ISCK…SCEE), 265-322 (KSCD…RCTL), 324-386 (PCDY…VPCL), 387-444 (RKCY…RCIR), 446-507 (KTCS…TCIK), 515-566 (MNAR…ICYE), 567-625 (RECE…ICKE), 628-686 (QSCG…VCIV), 689-746 (STCG…QCVA), 751-805 (KKCK…NCSM), 809-866 (QLCP…LCVE), 868-928 (IPCS…QCEG), 929-986 (LPCK…SCIK), 987-1045 (TDCL…TCRD), 1046-1104 (TSCV…QCKD), 1107-1165 (GKCG…KCLH), and 1170-1230 (SREI…TCAK). 40 disulfide bridges follow: C21-C66, C52-C80, C85-C129, C114-C141, C146-C192, C178-C205, C210-C251, C237-C262, C267-C309, C294-C320, C325-C374, C357-C385, C389-C431, C416-C442, C448-C494, C477-C505, C509-C553, C536-C564, C569-C611, C597-C623, C630-C673, C659-C684, C691-C733, C719-C744, C753-C792, C781-C803, C811-C853, C839-C864, C870-C915, C901-C926, C931-C973, C959-C984, C989-C1032, C1018-C1043, C1048-C1091, C1077-C1102, C1109-C1152, C1138-C1163, C1167-C1218, and C1201-C1228. The N-linked (GlcNAc...) (complex) asparagine glycan is linked to N217. N529 is a glycosylation site (N-linked (GlcNAc...) asparagine). Residue N718 is glycosylated (N-linked (GlcNAc...) asparagine). N-linked (GlcNAc...) asparagine glycosylation is found at N802 and N822. N-linked (GlcNAc...) (complex) asparagine glycosylation is found at N882 and N911. The N-linked (GlcNAc...) (complex) asparagine glycan is linked to N1029. Residue N1095 is glycosylated (N-linked (GlcNAc...) asparagine).

In terms of assembly, homodimer. Also forms homooligomers. Interacts with complement protein C3b; this interaction inhibits complement activation. Interacts with complement protein C3d. Interacts with CR3/ITGAM; this interaction mediates adhesion of neutrophils to pathogens leading to pathogen clearance. Interacts with complement factor I. As to quaternary structure, (Microbial infection) Interacts with West nile virus non-structural protein 1 (NS1); this interaction leads to the degradation of C3. (Microbial infection) Interacts with C.albicans GPD2; the interaction is direct and leads to the degradation of C3 which enables the pathogen to evade the host innate immune system. In terms of assembly, (Microbial infection) Interacts with Neisseria meningitidis protein fHbp. As to quaternary structure, (Microbial infection) Interacts with Borrelia burgdorferi outer surface protein E/OspE; this interaction recruits complement regulator factor H onto the bacterial surface to evade complement-mediated cell lysis. (Microbial infection) Interacts with Streptococcus pneumoniae protein virulence factor choline-binding protein A/CbpAN; this interaction enables Streptococcus pneumoniae to evade surveillance by human complement system. In terms of assembly, (Microbial infection) Interacts with Staphylococcus aureus surface protein serine-aspartate repeat protein E/SdrE; this interaction sequesters CFH on the surface of S.aureus for complement evasion. As to quaternary structure, (Microbial infection) Interacts with Staphylococcus aureus protein Sbi; this interaction inhibits the complement activation of the alternative pathway. (Microbial infection) Interacts (via sushi 4-6 domains) with P.falciparum surface protein PF92; the interaction recruits CFH onto the merozoite surface preventing complement-mediated cell lysis. The interaction does not affect CFH activity. Interacts (via sushi 6-7 domains) with P.falciparum (strain NF54) GAP50; the interaction occurs in the vector mosquito midgut at the surface of the activated parasite gametocytes; the interaction protects the parasite from alternative complement pathway-mediated elimination. In terms of assembly, (Microbial infection) Interacts (via sushi 4-6 domains) with P.falciparum surface protein PF92; the interaction recruits FHL-1 isoform onto the merozoite surface preventing complement-mediated cell lysis. The interaction does not affect FHL-1 isoform activity. Interacts (via sushi 6-7 domains) with P.falciparum (strain NF54) GAP50; the interaction occurs in the vector mosquito midgut at the surface of the activated parasite gametocytes; the interaction protects the parasite from alternative complement pathway-mediated elimination. Sulfated on tyrosine residues. In terms of processing, according to a report, Asn-217 is not glycosylated. Another study observed glycosylation at this position. In terms of tissue distribution, expressed in the retinal pigment epithelium (at protein level). CFH is one of the most abundant complement components in blood where the liver is the major source of CFH protein in vivo. in addition, CFH is secreted by additional cell types including monocytes, fibroblasts, or endothelial cells.

It localises to the secreted. Glycoprotein that plays an essential role in maintaining a well-balanced immune response by modulating complement activation. Acts as a soluble inhibitor of complement, where its binding to self markers such as glycan structures prevents complement activation and amplification on cell surfaces. Accelerates the decay of the complement alternative pathway (AP) C3 convertase C3bBb, thus preventing local formation of more C3b, the central player of the complement amplification loop. As a cofactor of the serine protease factor I, CFH also regulates proteolytic degradation of already-deposited C3b. In addition, mediates several cellular responses through interaction with specific receptors. For example, interacts with CR3/ITGAM receptor and thereby mediates the adhesion of human neutrophils to different pathogens. In turn, these pathogens are phagocytosed and destroyed. In terms of biological role, (Microbial infection) In the mosquito midgut, binds to the surface of parasite P.falciparum gametocytes and protects the parasite from alternative complement pathway-mediated elimination. In Homo sapiens (Human), this protein is Complement factor H (CFH).